Consider the following 468-residue polypeptide: Chromosomal replication initiator protein DnaA (468 aa).

A domain I, interacts with DnaA modulators region spans residues 1-84 (MSSSLWLQCL…RFEVGSRRVA (84 aa)). Residues 84–131 (AAPKPAPTRTPADVAAESSAPAQLQARKPVHKTWDDDAQVIADINHRS) form a domain II region. Residues 85–95 (APKPAPTRTPA) are compositionally biased toward low complexity. The tract at residues 85-104 (APKPAPTRTPADVAAESSAP) is disordered. The tract at residues 132 to 348 (NVNPKHKFNN…GALNRVIANA (217 aa)) is domain III, AAA+ region. Residues Gly-176, Gly-178, Lys-179, and Thr-180 each contribute to the ATP site. Residues 349–468 (NFTGRPITID…YSNLIRTLSS (120 aa)) are domain IV, binds dsDNA.

This sequence belongs to the DnaA family. Oligomerizes as a right-handed, spiral filament on DNA at oriC.

It localises to the cytoplasm. Its function is as follows. Plays an essential role in the initiation and regulation of chromosomal replication. ATP-DnaA binds to the origin of replication (oriC) to initiate formation of the DNA replication initiation complex once per cell cycle. Binds the DnaA box (a 9 base pair repeat at the origin) and separates the double-stranded (ds)DNA. Forms a right-handed helical filament on oriC DNA; dsDNA binds to the exterior of the filament while single-stranded (ss)DNA is stabiized in the filament's interior. The ATP-DnaA-oriC complex binds and stabilizes one strand of the AT-rich DNA unwinding element (DUE), permitting loading of DNA polymerase. After initiation quickly degrades to an ADP-DnaA complex that is not apt for DNA replication. Binds acidic phospholipids. In terms of biological role, complements a temperature-sensitive E.coli mutant, the DnaA consensus is 5'-TT(A/T)TNCACA-3'. The sequence is that of Chromosomal replication initiator protein DnaA from Vibrio harveyi (Beneckea harveyi).